The primary structure comprises 185 residues: Proton-translocating ferredoxin:NAD(+) oxidoreductase complex subunit G (185 aa).

A helical membrane pass occupies residues 14–34; that stretch reads TKNLTITCFISGIIIAAVYYI. Residue T161 is modified to FMN phosphoryl threonine.

The protein belongs to the RnfG family. As to quaternary structure, the complex is composed of six subunits: RnfA, RnfB, RnfC, RnfD, RnfE and RnfG. The cofactor is FMN.

Its subcellular location is the cell membrane. Functionally, part of a membrane-bound complex that couples electron transfer with translocation of ions across the membrane. Couples electron transfer from reduced ferredoxin to NAD(+) with translocation of H(+) out of the cell. Essential for energy conservation during autotrophic growth. Contributes to ATP synthesis during heterotrophic growth. The protein is Proton-translocating ferredoxin:NAD(+) oxidoreductase complex subunit G of Clostridium ljungdahlii (strain ATCC 55383 / DSM 13528 / PETC).